The following is a 118-amino-acid chain: Small ribosomal subunit protein mS37 (118 aa).

In terms of domain architecture, CHCH spans 42 to 84; the sequence is EATCITEMSMMMACWKQNEFRDEACRKEIQDFFDCSSRAQEAR. 2 consecutive short sequence motifs (cx9C motif) follow at residues 45–55 and 66–76; these read CITEMSMMMAC and CRKEIQDFFDC. 2 cysteine pairs are disulfide-bonded: Cys45–Cys76 and Cys55–Cys66. Residues 86 to 105 are disordered; it reads MRSIQESLGQSESLSPHKMT. Residues 89–99 are compositionally biased toward polar residues; sequence IQESLGQSESL.

The protein belongs to the mitochondrion-specific ribosomal protein mS37 family. Component of the mitochondrial ribosome small subunit (28S) which comprises a 12S rRNA and about 30 distinct proteins.

Its subcellular location is the mitochondrion. The protein resides in the nucleus. This Mus musculus (Mouse) protein is Small ribosomal subunit protein mS37 (Chchd1).